Consider the following 395-residue polypeptide: Acetate kinase 1 (395 aa).

N8 provides a ligand contact to Mg(2+). K15 is an ATP binding site. R89 contributes to the substrate binding site. D146 functions as the Proton donor/acceptor in the catalytic mechanism. ATP contacts are provided by residues 206-210 (HIGNG), 283-285 (DMR), and 330-334 (GIGEN). E382 is a binding site for Mg(2+).

The protein belongs to the acetokinase family. In terms of assembly, homodimer. The cofactor is Mg(2+). Mn(2+) is required as a cofactor.

It localises to the cytoplasm. The enzyme catalyses acetate + ATP = acetyl phosphate + ADP. The protein operates within metabolic intermediate biosynthesis; acetyl-CoA biosynthesis; acetyl-CoA from acetate: step 1/2. Catalyzes the formation of acetyl phosphate from acetate and ATP. Can also catalyze the reverse reaction. The chain is Acetate kinase 1 from Lactococcus lactis subsp. lactis (strain IL1403) (Streptococcus lactis).